The chain runs to 286 residues: 4-hydroxybenzoate octaprenyltransferase (286 aa).

A run of 7 helical transmembrane segments spans residues Gly21–Met40, Ile95–Val115, Phe142–Val162, Trp167–Val187, Ile211–Glu231, Leu235–Phe255, and Phe266–Ile286.

This sequence belongs to the UbiA prenyltransferase family. Requires Mg(2+) as cofactor.

Its subcellular location is the cell inner membrane. It carries out the reaction all-trans-octaprenyl diphosphate + 4-hydroxybenzoate = 4-hydroxy-3-(all-trans-octaprenyl)benzoate + diphosphate. The protein operates within cofactor biosynthesis; ubiquinone biosynthesis. Its function is as follows. Catalyzes the prenylation of para-hydroxybenzoate (PHB) with an all-trans polyprenyl group. Mediates the second step in the final reaction sequence of ubiquinone-8 (UQ-8) biosynthesis, which is the condensation of the polyisoprenoid side chain with PHB, generating the first membrane-bound Q intermediate 3-octaprenyl-4-hydroxybenzoate. This Shewanella putrefaciens (strain CN-32 / ATCC BAA-453) protein is 4-hydroxybenzoate octaprenyltransferase.